Here is a 313-residue protein sequence, read N- to C-terminus: Probable RuBisCO transcriptional regulator (313 aa).

The 58-residue stretch at 6-63 folds into the HTH lysR-type domain; it reads FTLDQLLILKAIAAQGSFKKAADSLYISQPAVSMQVQNIEKQLNVQLLDRGGRRANLT. Positions 23–42 form a DNA-binding region, H-T-H motif; sequence FKKAADSLYISQPAVSMQVQ.

Belongs to the LysR transcriptional regulatory family.

The protein localises to the plastid. Its subcellular location is the chloroplast. Its function is as follows. Trans-acting transcriptional regulator of RuBisCO genes (rbcL and rbcS) expression. This chain is Probable RuBisCO transcriptional regulator (rbcR), found in Chlorokybus atmophyticus (Soil alga).